Here is a 204-residue protein sequence, read N- to C-terminus: Peptide deformylase (204 aa).

Fe cation contacts are provided by cysteine 131 and histidine 174. The active site involves glutamate 175. Fe cation is bound at residue histidine 178.

The protein belongs to the polypeptide deformylase family. Requires Fe(2+) as cofactor.

It carries out the reaction N-terminal N-formyl-L-methionyl-[peptide] + H2O = N-terminal L-methionyl-[peptide] + formate. In terms of biological role, removes the formyl group from the N-terminal Met of newly synthesized proteins. Requires at least a dipeptide for an efficient rate of reaction. N-terminal L-methionine is a prerequisite for activity but the enzyme has broad specificity at other positions. This is Peptide deformylase from Streptococcus agalactiae serotype III (strain NEM316).